Reading from the N-terminus, the 75-residue chain is MKEANTRRYIYLCLVVVLLSIIITTEAEDDRLFCIRHHKYCGHRPKRCCSGLFCRCNTFGTNCRCQSKGALGKLI.

The signal sequence occupies residues M1–A27. Residues E28–D30 constitute a propeptide that is removed on maturation. Cystine bridges form between C34/C49, C41/C54, C48/C65, and C56/C63.

The protein belongs to the xibalbin-13 family. Expressed by the venom gland and the whole body.

Its subcellular location is the secreted. Functionally, probable neurotoxin. Strongly inhibits voltage-gated potassium channels (Kv1.1/KCNA1, Kv1.2/KCNA2, Kv1.3/KCNA3, and Kv1.6/KCNA6, with the highest toxicity against Kv1.1 (85.1% inhibition at 1 uM)) and mildly inhibits sodium channels (Nav1.2/SCN2A, Nav1.4/SCN4A, Nav1.5/SCN5A, Nav1.6/SCN8A, and BgNav). Induces activation of protein kinase A type II (PKA-II) and MAP kinase Erk1/2 in primary nociceptive and non-nociceptive sensory neurons. Does not show cytotoxic activity. Does not have an impact on Ca2+, cAMP, and NO signaling in the cell types analyzed. Does not interfere with the adhesion of leukocytes to endothelial cells. This Xibalbanus tulumensis (Blind cave remipede) protein is Xibalbin-13 2.